The sequence spans 91 residues: MTDTDIKSHKIEFPCNDYPIKVIGDTSVGFTAAVMEVLEKHATVDLKTLAERQSSNGKYTTVQLHIVATGEDQLRDINSALRATGFVHMVL.

This sequence belongs to the UPF0250 family.

The chain is UPF0250 protein Psyr_4360 from Pseudomonas syringae pv. syringae (strain B728a).